The following is a 326-amino-acid chain: Target of rapamycin complex subunit LST8 (326 aa).

M1 is modified (N-acetylmethionine). 5 WD repeats span residues 1–37 (MNTT…CTRT), 40–80 (HQDS…PIIS), 83–122 (GVSK…LQCQ), 126–165 (QVNA…NEQL), and 168–207 (EPEF…GDEV). The residue at position 51 (T51) is a Phosphothreonine. A Glycyl lysine isopeptide (Lys-Gly) (interchain with G-Cter in SUMO3) cross-link involves residue K86. Residues K215, K245, and K261 each participate in a glycyl lysine isopeptide (Lys-Gly) (interchain with G-Cter in SUMO3) cross-link. The WD 6 repeat unit spans residues 218–257 (AHTRYALQCRFSPDSTLLATCSADQTCKIWRTSNFSLMTE). The stretch at 268–309 (SSRGWMWGCAFSGDSQYIVTASSDNLARLWCVETGEIKREYG) is one WD 7 repeat. Residue K305 forms a Glycyl lysine isopeptide (Lys-Gly) (interchain with G-Cter in SUMO3); alternate linkage. Glycyl lysine isopeptide (Lys-Gly) (interchain with G-Cter in ubiquitin); alternate cross-links involve residues K305 and K313. Residue K313 forms a Glycyl lysine isopeptide (Lys-Gly) (interchain with G-Cter in SUMO1); alternate linkage.

This sequence belongs to the WD repeat LST8 family. As to quaternary structure, part of the mechanistic target of rapamycin complex 1 (mTORC1) which contains MTOR, MLST8 and RPTOR. mTORC1 associates with AKT1S1/PRAS40, which inhibits its activity. mTORC1 binds to and is inhibited by FKBP12-rapamycin. Within mTORC1, interacts directly with MTOR and RPTOR. Component of the mechanistic target of rapamycin complex 2 (mTORC2), consisting in two heterotretramers composed of MTOR, MLST8, RICTOR and MAPKAP1/SIN1. Contrary to mTORC1, mTORC2 does not bind to and is not sensitive to FKBP12-rapamycin. mTORC1 and mTORC2 associate with DEPTOR, which regulates their activity. Interacts with RHEB. Interacts with MEAK7. Interacts with SIK3. Interacts with SLC38A7; this interaction promotes the recruitment of mTORC1 to the lysosome and its subsequent activation. In terms of processing, phosphorylation at Thr-51 by CDK1 promotes ubiquitination by the SCF(FBXW7) complex, followed by degradation. Ubiquitination by the SCF(FBXW7) and SCF(FBXW11) complexes following phosphorylation at Thr-51 by CDK1, leads to its degradation by the proteasome. Ubiquitination at Lys-305 and Lys-313 by TRAF2 via 'Lys-63'-linked polyubiquitin chains inhibits formation of the mTORC2 complex, while promoting formation of the mTORC1 complex: ubiquitination disrupts the interaction between MLST8 and MAPKAP1/SIN1 to favor mTORC1 assembly. Deubiquitination at Lys-305 and Lys-313 by OTUD7B promotes MLST8 interaction with MAPKAP1/SIN1, facilitating mTORC2 assembly. Post-translationally, sumoylation with SUMO1, SUMO2 and SUMO3 promotes assembly of both mTORC1 and mTORC2 complexes. In terms of tissue distribution, expressed at highest levels in the brain and testis, followed by lung, heart, kidney, skeletal muscle, spleen and liver. Also expressed in epididymal, abdominal and brown fat, small intestine and pancreas.

The protein localises to the lysosome membrane. The protein resides in the cytoplasm. In terms of biological role, subunit of both mTORC1 and mTORC2, which regulates cell growth and survival in response to nutrient and hormonal signals. mTORC1 is activated in response to growth factors or amino acids. In response to nutrients, mTORC1 is recruited to the lysosome membrane and promotes protein, lipid and nucleotide synthesis by phosphorylating several substrates, such as ribosomal protein S6 kinase (RPS6KB1 and RPS6KB2) and EIF4EBP1 (4E-BP1). In the same time, it inhibits catabolic pathways by phosphorylating the autophagy initiation components ULK1 and ATG13, as well as transcription factor TFEB, a master regulators of lysosomal biogenesis and autophagy. The mTORC1 complex is inhibited in response to starvation and amino acid depletion. Within mTORC1, MLST8 interacts directly with MTOR and enhances its kinase activity. In nutrient-poor conditions, stabilizes the MTOR-RPTOR interaction and favors RPTOR-mediated inhibition of MTOR activity. As part of the mTORC2 complex, transduces signals from growth factors to pathways involved in proliferation, cytoskeletal organization, lipogenesis and anabolic output. mTORC2 is also activated by growth factors, but seems to be nutrient-insensitive. In response to growth factors, mTORC2 phosphorylates and activates AGC protein kinase family members, including AKT (AKT1, AKT2 and AKT3), PKC (PRKCA, PRKCB and PRKCE) and SGK1. mTORC2 functions upstream of Rho GTPases to regulate the actin cytoskeleton, probably by activating one or more Rho-type guanine nucleotide exchange factors. mTORC2 promotes the serum-induced formation of stress-fibers or F-actin. mTORC2 plays a critical role in AKT1 activation by mediating phosphorylation of different sites depending on the context, such as 'Thr-450', 'Ser-473', 'Ser-477' or 'Thr-479', facilitating the phosphorylation of the activation loop of AKT1 on 'Thr-308' by PDPK1/PDK1 which is a prerequisite for full activation. mTORC2 regulates the phosphorylation of SGK1 at 'Ser-422'. mTORC2 also modulates the phosphorylation of PRKCA on 'Ser-657'. Within mTORC2, MLST8 acts as a bridge between MAPKAP1/SIN1 and MTOR. This Rattus norvegicus (Rat) protein is Target of rapamycin complex subunit LST8.